A 302-amino-acid polypeptide reads, in one-letter code: Heme A synthase (302 aa).

The Cytoplasmic portion of the chain corresponds to 1–6 (MNKALK). Residues 7–27 (GLGIITTIAMLFVLIGGALVT) traverse the membrane as a helical segment. At 28 to 61 (KTGSGMGCGRSWPLCNGSIFPALTLESIIEWSHR) the chain is on the extracellular side. The cysteines at positions 35 and 42 are disulfide-linked. Residue Glu-57 is part of the active site. Position 60 (His-60) interacts with heme o. Residues 62-82 (FVSGTSGVLVLALAIWTWKKI) traverse the membrane as a helical segment. Residues 83-91 (GHIRETKFL) are Cytoplasmic-facing. The helical transmembrane segment at 92 to 112 (AVMSVVFLILQALLGAAAVVF) threads the bilayer. At 113–120 (GSSALIMA) the chain is on the extracellular side. The chain crosses the membrane as a helical span at residues 121–141 (LHFGISLISFASVLLLTLLVF). Position 122 (His-122) interacts with heme o. Topologically, residues 142–158 (EADSKQKSESFYIGKTM) are cytoplasmic. The helical transmembrane segment at 159-179 (QFHMIGIIIYTYVVVYTGAYV) threads the bilayer. Topologically, residues 180–208 (RHTSSSLACLDFPMCSTENGWLPGKFHEW) are extracellular. An intrachain disulfide couples Cys-188 to Cys-194. The chain crosses the membrane as a helical span at residues 209 to 229 (VQMGHRAAALLLFAWIIAAAV). His-213 is a heme b binding site. The Cytoplasmic segment spans residues 230 to 242 (HAARQYKNQKRIY). A helical transmembrane segment spans residues 243–263 (WGWMISLILIILQAASGIAVV). Residues 264-272 (YSRLDLGFA) lie on the Extracellular side of the membrane. A helical transmembrane segment spans residues 273-293 (LAHAFFISCLFGILCYFLLLV). A heme b-binding site is contributed by His-275. Residues 294–302 (ARYRRQVQK) lie on the Cytoplasmic side of the membrane.

It belongs to the COX15/CtaA family. Type 1 subfamily. Interacts with CtaB. Heme b is required as a cofactor.

The protein localises to the cell membrane. The catalysed reaction is Fe(II)-heme o + 2 A + H2O = Fe(II)-heme a + 2 AH2. The protein operates within porphyrin-containing compound metabolism; heme A biosynthesis; heme A from heme O: step 1/1. Catalyzes the conversion of heme O to heme A by two successive hydroxylations of the methyl group at C8. The first hydroxylation forms heme I, the second hydroxylation results in an unstable dihydroxymethyl group, which spontaneously dehydrates, resulting in the formyl group of heme A. This is Heme A synthase from Bacillus licheniformis (strain ATCC 14580 / DSM 13 / JCM 2505 / CCUG 7422 / NBRC 12200 / NCIMB 9375 / NCTC 10341 / NRRL NRS-1264 / Gibson 46).